The sequence spans 158 residues: Ribosome association toxin RatA (158 aa).

It belongs to the ribosome association toxin RatA family. As to quaternary structure, associates with 50S ribosomes.

Toxic component of a type II toxin-antitoxin (TA) system. Binds to 50S ribosomal subunits, preventing them from associating with 30S subunits to form 70S ribosomes and reducing polysomes. It does not cause ribosomes to dissociate however. The antibiotic paromomycin blocks the anti-association activity of RatA. Overexpression results in inhibition of growth in liquid cultures, and in a decrease in protein translation. The other gene of this operon, ratB, is not the cognate antitoxin in this strain; in CFT073 however it does fulfill this function. In terms of biological role, low level expression in a deletion mutant increases resistance to acidified sodium nitrate which causes nitrosative stress. In Escherichia coli (strain K12), this protein is Ribosome association toxin RatA (ratA).